We begin with the raw amino-acid sequence, 744 residues long: 6-phosphofructo-2-kinase/fructose-2,6-bisphosphatase (744 aa).

Disordered regions lie at residues 1–23 (MGSG…GGQL) and 213–245 (RSLS…DGSP). Residue G2 is the site of N-myristoyl glycine attachment. One can recognise a CBM20 domain in the interval 17–122 (NGGGGQLYVS…GDARLALFRL (106 aa)). A compositionally biased stretch (polar residues) spans 213–232 (RSLSASGSFRNDSTPKAAQR). At S220 the chain carries Phosphoserine; by CPK3. S276 and S295 each carry phosphoserine. The segment at 301–549 (SLSASSFLID…VFFLVNTHLT (249 aa)) is 6-phosphofructo-2-kinase. Position 303 is a phosphoserine; by CPK3 (S303). 349–357 (GLPARGKTF) is an ATP binding site. Positions 382 and 406 each coordinate beta-D-fructose 6-phosphate. D431 is an active-site residue. Beta-D-fructose 6-phosphate is bound by residues T433 and R439. C460 is a catalytic residue. 469 to 474 (NIRLKI) is an ATP binding site. 2 residues coordinate beta-D-fructose 6-phosphate: R496 and Y500. Residues 550–744 (PRPILLTRHG…VQEKRYKLMD (195 aa)) are fructose-2,6-bisphosphatase. R557 is a beta-D-fructose 2,6-bisphosphate binding site. The active-site Tele-phosphohistidine intermediate is the H558. The beta-D-fructose 2,6-bisphosphate site is built by N564 and G570. E630 serves as the catalytic Proton donor/acceptor. Beta-D-fructose 2,6-bisphosphate contacts are provided by Y641, R655, K659, Y670, Q697, and R701. Residue 652–655 (YESR) participates in ATP binding. Residue 697-701 (QAVLR) coordinates ATP.

The protein in the C-terminal section; belongs to the phosphoglycerate mutase family. In terms of assembly, interacts with 14-3-3 proteins; these interactions may regulate both nitrate assimilation and sucrose/starch partitioning in leaves during the diurnal cycle. In terms of processing, phosphorylation at Ser-220 and Ser-303 by CPK3 promotes 14-3-3 proteins binding.

It is found in the membrane. The protein localises to the cytoplasm. The enzyme catalyses beta-D-fructose 2,6-bisphosphate + H2O = beta-D-fructose 6-phosphate + phosphate. The catalysed reaction is beta-D-fructose 6-phosphate + ATP = beta-D-fructose 2,6-bisphosphate + ADP + H(+). With respect to regulation, 6-phosphofructo-2-kinase activity is activated by pyruvate. 6-phosphofructo-2-kinase activity is inhibited by PPi, phosphoenolpyruvate and 2-phosphoglycerate. Fructose-2,6-bisphosphatase activity is inhibited by pyruvate, fructose 1,6-bisphosphate and 6-phosphogluconate. Synthesis and degradation of fructose 2,6-bisphosphate. Regulates carbon partitioning between sucrose versus starch during the diurnal cycle. This chain is 6-phosphofructo-2-kinase/fructose-2,6-bisphosphatase (FKFBP), found in Arabidopsis thaliana (Mouse-ear cress).